A 120-amino-acid chain; its full sequence is Ribosome-binding factor A (120 aa).

Belongs to the RbfA family. As to quaternary structure, monomer. Binds 30S ribosomal subunits, but not 50S ribosomal subunits or 70S ribosomes.

It localises to the cytoplasm. Its function is as follows. One of several proteins that assist in the late maturation steps of the functional core of the 30S ribosomal subunit. Associates with free 30S ribosomal subunits (but not with 30S subunits that are part of 70S ribosomes or polysomes). Required for efficient processing of 16S rRNA. May interact with the 5'-terminal helix region of 16S rRNA. The sequence is that of Ribosome-binding factor A from Rickettsia rickettsii (strain Iowa).